The sequence spans 102 residues: UPF0751 protein Dhaf_1351 (102 aa).

Belongs to the UPF0751 family.

The sequence is that of UPF0751 protein Dhaf_1351 from Desulfitobacterium hafniense (strain DSM 10664 / DCB-2).